We begin with the raw amino-acid sequence, 1577 residues long: Pentafunctional AROM polypeptide (1577 aa).

The segment at 1 to 392 (MASVGLEKVN…YGTSAHVVSD (392 aa)) is 3-dehydroquinate synthase. Residues 80–83 (ETYK), 111–113 (GGV), and aspartate 116 each bind NAD(+). Arginine 127 lines the 7-phospho-2-dehydro-3-deoxy-D-arabino-heptonate pocket. 136–137 (TS) is an NAD(+) binding site. Residues aspartate 143 and lysine 149 each contribute to the 7-phospho-2-dehydro-3-deoxy-D-arabino-heptonate site. Lysine 158 lines the NAD(+) pocket. 7-phospho-2-dehydro-3-deoxy-D-arabino-heptonate is bound at residue asparagine 159. Residues 176 to 179 (WLET) and asparagine 187 contribute to the NAD(+) site. Residue glutamate 191 participates in Zn(2+) binding. 7-phospho-2-dehydro-3-deoxy-D-arabino-heptonate is bound by residues 191–194 (EVIK) and lysine 258. Glutamate 268 (proton acceptor; for 3-dehydroquinate synthase activity) is an active-site residue. Residues 272 to 276 (RNLLN) and histidine 279 contribute to the 7-phospho-2-dehydro-3-deoxy-D-arabino-heptonate site. Residue histidine 279 participates in Zn(2+) binding. Catalysis depends on histidine 283, which acts as the Proton acceptor; for 3-dehydroquinate synthase activity. Residues histidine 295 and lysine 364 each contribute to the 7-phospho-2-dehydro-3-deoxy-D-arabino-heptonate site. Residue histidine 295 coordinates Zn(2+). The tract at residues 405–863 (VYPFTDVRSS…WDVLHSRLGA (459 aa)) is EPSP synthase. Catalysis depends on cysteine 845, which acts as the For EPSP synthase activity. The shikimate kinase stretch occupies residues 882–1071 (VVLIGMRAAG…VPVKRSTFVC (190 aa)). 886 to 893 (GMRAAGKS) is an ATP binding site. Residues 1072–1284 (LTFQNLLPEM…AAPGQLTLRQ (213 aa)) are 3-dehydroquinase. Histidine 1189 functions as the Proton acceptor; for 3-dehydroquinate dehydratase activity in the catalytic mechanism. Lysine 1218 serves as the catalytic Schiff-base intermediate with substrate; for 3-dehydroquinate dehydratase activity. The segment at 1297-1577 (PKKMFVVGSP…APVYDAVTQE (281 aa)) is shikimate dehydrogenase.

It in the N-terminal section; belongs to the sugar phosphate cyclases superfamily. Dehydroquinate synthase family. This sequence in the 2nd section; belongs to the EPSP synthase family. The protein in the 3rd section; belongs to the shikimate kinase family. In the 4th section; belongs to the type-I 3-dehydroquinase family. It in the C-terminal section; belongs to the shikimate dehydrogenase family. Homodimer. It depends on Zn(2+) as a cofactor.

It is found in the cytoplasm. It carries out the reaction 7-phospho-2-dehydro-3-deoxy-D-arabino-heptonate = 3-dehydroquinate + phosphate. The catalysed reaction is 3-dehydroquinate = 3-dehydroshikimate + H2O. It catalyses the reaction shikimate + NADP(+) = 3-dehydroshikimate + NADPH + H(+). The enzyme catalyses shikimate + ATP = 3-phosphoshikimate + ADP + H(+). It carries out the reaction 3-phosphoshikimate + phosphoenolpyruvate = 5-O-(1-carboxyvinyl)-3-phosphoshikimate + phosphate. Its pathway is metabolic intermediate biosynthesis; chorismate biosynthesis; chorismate from D-erythrose 4-phosphate and phosphoenolpyruvate: step 2/7. The protein operates within metabolic intermediate biosynthesis; chorismate biosynthesis; chorismate from D-erythrose 4-phosphate and phosphoenolpyruvate: step 3/7. It participates in metabolic intermediate biosynthesis; chorismate biosynthesis; chorismate from D-erythrose 4-phosphate and phosphoenolpyruvate: step 4/7. It functions in the pathway metabolic intermediate biosynthesis; chorismate biosynthesis; chorismate from D-erythrose 4-phosphate and phosphoenolpyruvate: step 5/7. Its pathway is metabolic intermediate biosynthesis; chorismate biosynthesis; chorismate from D-erythrose 4-phosphate and phosphoenolpyruvate: step 6/7. The AROM polypeptide catalyzes 5 consecutive enzymatic reactions in prechorismate polyaromatic amino acid biosynthesis. This is Pentafunctional AROM polypeptide from Eremothecium gossypii (strain ATCC 10895 / CBS 109.51 / FGSC 9923 / NRRL Y-1056) (Yeast).